A 123-amino-acid chain; its full sequence is uncharacterized protein (123 aa).

Residues 5–25 (GTLVILFAIILILCIMLLFYY) form a helical membrane-spanning segment.

Belongs to the asfivirus CP123L family.

The protein localises to the host membrane. Its subcellular location is the virion. This is an uncharacterized protein from Ornithodoros (relapsing fever ticks).